The primary structure comprises 349 residues: Probable FBD-associated F-box protein At5g38565 (349 aa).

In terms of domain architecture, F-box spans 1 to 47 (MDIFNGLPDDVLVKILSFVPTKVAVSTSILSKRWEFLWMWLPRLDFG). Residues 263-311 (CWNQPISVPECLLESLQIFNLSHYFGKQQDLDFVVYILKNACHLKTATI) enclose the FBD domain.

In Arabidopsis thaliana (Mouse-ear cress), this protein is Probable FBD-associated F-box protein At5g38565.